Reading from the N-terminus, the 402-residue chain is Renin (402 aa).

The N-terminal stretch at 1-26 (MGGRRMPLWALLLLWTSCSFSLPTDT) is a signal peptide. A propeptide spans 27-64 (ASFGRILLKKMPSVREILEERGVDMTRISAEWGEFIKK) (activation peptide). Residue Asn-69 is glycosylated (N-linked (GlcNAc...) asparagine). One can recognise a Peptidase A1 domain in the interval 84–399 (YYGEIGIGTP…DRHNNRIGFA (316 aa)). The active site involves Asp-102. Cys-115 and Cys-122 form a disulfide bridge. N-linked (GlcNAc...) asparagine glycosylation is present at Asn-139. A disulfide bond links Cys-278 and Cys-282. The active site involves Asp-287. N-linked (GlcNAc...) asparagine glycosylation is present at Asn-320. Cys-321 and Cys-358 are joined by a disulfide.

It belongs to the peptidase A1 family. As to quaternary structure, interacts with ATP6AP2.

It is found in the secreted. The protein resides in the membrane. The catalysed reaction is Cleavage of Leu-|-Xaa bond in angiotensinogen to generate angiotensin I.. Its activity is regulated as follows. Interaction with ATP6AP2 results in a 5-fold increased efficiency in angiotensinogen processing. Renin is a highly specific endopeptidase, whose only known function is to generate angiotensin I from angiotensinogen in the plasma, initiating a cascade of reactions that produce an elevation of blood pressure and increased sodium retention by the kidney. The protein is Renin (Ren1) of Rattus norvegicus (Rat).